Reading from the N-terminus, the 389-residue chain is Chorismate synthase (389 aa).

2 residues coordinate NADP(+): Arg-40 and Arg-46. FMN is bound by residues 130 to 132 (RAS), 251 to 252 (QA), Gly-297, 312 to 316 (KPIST), and Arg-338.

This sequence belongs to the chorismate synthase family. In terms of assembly, homotetramer. The cofactor is FMNH2.

It catalyses the reaction 5-O-(1-carboxyvinyl)-3-phosphoshikimate = chorismate + phosphate. It participates in metabolic intermediate biosynthesis; chorismate biosynthesis; chorismate from D-erythrose 4-phosphate and phosphoenolpyruvate: step 7/7. In terms of biological role, catalyzes the anti-1,4-elimination of the C-3 phosphate and the C-6 proR hydrogen from 5-enolpyruvylshikimate-3-phosphate (EPSP) to yield chorismate, which is the branch point compound that serves as the starting substrate for the three terminal pathways of aromatic amino acid biosynthesis. This reaction introduces a second double bond into the aromatic ring system. The chain is Chorismate synthase from Solibacter usitatus (strain Ellin6076).